Reading from the N-terminus, the 305-residue chain is Sulfate adenylyltransferase subunit 2 (305 aa).

The protein belongs to the PAPS reductase family. CysD subfamily. As to quaternary structure, heterodimer composed of CysD, the smaller subunit, and CysN.

The enzyme catalyses sulfate + ATP + H(+) = adenosine 5'-phosphosulfate + diphosphate. The protein operates within sulfur metabolism; hydrogen sulfide biosynthesis; sulfite from sulfate: step 1/3. With CysN forms the ATP sulfurylase (ATPS) that catalyzes the adenylation of sulfate producing adenosine 5'-phosphosulfate (APS) and diphosphate, the first enzymatic step in sulfur assimilation pathway. APS synthesis involves the formation of a high-energy phosphoric-sulfuric acid anhydride bond driven by GTP hydrolysis by CysN coupled to ATP hydrolysis by CysD. The polypeptide is Sulfate adenylyltransferase subunit 2 (Ectopseudomonas mendocina (strain ymp) (Pseudomonas mendocina)).